We begin with the raw amino-acid sequence, 147 residues long: Large ribosomal subunit protein bL9 (147 aa).

Belongs to the bacterial ribosomal protein bL9 family.

Functionally, binds to the 23S rRNA. This Campylobacter jejuni subsp. jejuni serotype O:2 (strain ATCC 700819 / NCTC 11168) protein is Large ribosomal subunit protein bL9.